The following is a 201-amino-acid chain: MELVLKDAQSALEVSETTFGRDFNEALVHQVVVAYAANARQGTRAQKTRAEVTGSGKKPWRQKGTGRARAGGVKGPIWRGGGVTFAAKTQDHSQKVNKKMYRGALKSILSELVRQDRLVVVESFSVEAPKTKELKAKLKAMNLEDVLIVTAEVDENLFLAARNLYKVDVRDVAGLDPVSLIAFNTVLVTADAVKQIEEMLA.

The interval 45-71 (AQKTRAEVTGSGKKPWRQKGTGRARAG) is disordered.

This sequence belongs to the universal ribosomal protein uL4 family. Part of the 50S ribosomal subunit.

One of the primary rRNA binding proteins, this protein initially binds near the 5'-end of the 23S rRNA. It is important during the early stages of 50S assembly. It makes multiple contacts with different domains of the 23S rRNA in the assembled 50S subunit and ribosome. Its function is as follows. Forms part of the polypeptide exit tunnel. This chain is Large ribosomal subunit protein uL4, found in Shewanella sp. (strain MR-4).